We begin with the raw amino-acid sequence, 575 residues long: Thrombomodulin (575 aa).

The signal sequence occupies residues 1–18; that stretch reads MLGVLVLGALALAGLGFP. The Extracellular portion of the chain corresponds to 19–515; it reads APAEPQPGGS…TPPAVGLVHS (497 aa). The C-type lectin domain occupies 31 to 169; that stretch reads VEHDCFALYP…VKADGFLCEF (139 aa). N-linked (GlcNAc...) asparagine glycans are attached at residues N47, N115, and N116. 19 disulfide bridges follow: C137/C158, C245/C256, C252/C265, C267/C280, C288/C296, C292/C308, C310/C323, C329/C340, C336/C349, C351/C362, C369/C378, C374/C388, C390/C404, C408/C413, C417/C425, C427/C439, C445/C455, C451/C464, and C466/C480. EGF-like domains follow at residues 241–281 and 284–324; these read GAWD…RSCT and ATQS…HRCE. Residues 325-363 enclose the EGF-like 3; calcium-binding domain; that stretch reads DVDDCILEPSPCPQRCVNTQGGFECHCYPNYDLVDGECV. Position 342 is a (3R)-3-hydroxyasparagine (N342). EGF-like domains are found at residues 365-405 and 404-440; these read PVDP…HRCQ and CQMF…FICT. Residue N382 is glycosylated (N-linked (GlcNAc...) asparagine). N409 carries an N-linked (GlcNAc...) asparagine glycan. In terms of domain architecture, EGF-like 6; calcium-binding spans 441-481; sequence DIDECENGGFCSGVCHNLPGTFECICGPDSALARHIGTDCD. An involved in alpha-L/beta-2 and alpha-M/beta-2 integrin binding region spans residues 481 to 515; sequence DSGKVDGGDSGSGEPPPSPTPGSTLTPPAVGLVHS. The interval 484-506 is disordered; that stretch reads KVDGGDSGSGEPPPSPTPGSTLT. Residues S490 and S492 are each glycosylated (O-linked (Xyl...) (chondroitin sulfate) serine). The helical transmembrane segment at 516-539 threads the bilayer; sequence GLLIGISIASLCLVVALLALLCHL. The Cytoplasmic portion of the chain corresponds to 540–575; it reads RKKQGAARAKMEYKCAAPSKEVVLQHVRTERTPQRL.

In terms of assembly, interacts with ITGAL, ITGAM and ITGB2. Interacts with thrombin/F2; this interaction switches the specificity of thrombin from a procoagulant to an anticoagulant and antifibrinolytic protease. Interacts with ANGP1 and ANGP2; these interactions significantly inhibit the generation of activated PC and TAFIa/CPB2 by the thrombin/thrombomodulin complex. Interacts with PF4; this interaction enhances generation of activated protein C. Interacts with HMGB1; this interaction inhibits HMGB1 inflammatory activity. Post-translationally, N-glycosylated. In terms of processing, the iron and 2-oxoglutarate dependent 3-hydroxylation of aspartate and asparagine is (R) stereospecific within EGF domains. Endothelial cells are unique in synthesizing thrombomodulin.

Its subcellular location is the membrane. Endothelial cell receptor that plays a critical role in regulating several physiological processes including hemostasis, coagulation, fibrinolysis, inflammation, and angiogenesis. Acts as a cofactor for thrombin activation of protein C/PROC on the surface of vascular endothelial cells leading to initiation of the activated protein C anticoagulant pathway. Also accelerates the activation of the plasma carboxypeptidase B2/CPB2, which catalyzes removal of C-terminal basic amino acids from its substrates including kinins or anaphylatoxins leading to fibrinolysis inhibition. Plays critical protective roles in changing the cleavage specificity of protease-activated receptor 1/PAR1, inhibiting endothelial cell permeability and inflammation. Suppresses inflammation distinctly from its anticoagulant cofactor activity by sequestering HMGB1 thereby preventing it from engaging cellular receptors such as RAGE and contributing to the inflammatory response. In Homo sapiens (Human), this protein is Thrombomodulin (THBD).